The sequence spans 219 residues: UPF0619 GPI-anchored membrane protein AFUA_3G00880 (219 aa).

The first 16 residues, 1–16 (MRFALTLTAFVGSVAA), serve as a signal peptide directing secretion. An N-linked (GlcNAc...) asparagine glycan is attached at Asn-85. 2 disordered regions span residues 107–144 (SQQF…GTVS) and 160–205 (SSTL…SLTV). Positions 114–144 (SSGSSTTSDSTSSASATGSASTSSSSTGTVS) are enriched in low complexity. Asn-198 carries the GPI-like-anchor amidated asparagine lipid modification. Residues 199 to 219 (GAGSLTVPAGSLLLGLVALAL) constitute a propeptide, removed in mature form.

This sequence belongs to the UPF0619 family. In terms of processing, the GPI-like anchor contains a phosphoceramide lipid group. The anchor position has not been determined.

It is found in the cell membrane. The sequence is that of UPF0619 GPI-anchored membrane protein AFUA_3G00880 from Aspergillus fumigatus (strain ATCC MYA-4609 / CBS 101355 / FGSC A1100 / Af293) (Neosartorya fumigata).